The sequence spans 153 residues: MYAVVRLRGQVNVRYTIEDTMKMLRLHKVNHCVFLPENPHYKGMVQKVKDYVAYGKIDAKTLAEVLENRGRLEGDARLTEEYIRENTDYDSIKAFAEAVVEGKASLKDVPKLKPVFRLHPPRKGHAGIKRTVQQGGVLGNHEENINVLLHKMR.

The protein belongs to the universal ribosomal protein uL30 family. In terms of assembly, part of the 50S ribosomal subunit.

The sequence is that of Large ribosomal subunit protein uL30 from Methanosarcina mazei (strain ATCC BAA-159 / DSM 3647 / Goe1 / Go1 / JCM 11833 / OCM 88) (Methanosarcina frisia).